The sequence spans 205 residues: NADH-quinone oxidoreductase subunit J (205 aa).

5 consecutive transmembrane segments (helical) span residues 1 to 21, 26 to 46, 54 to 74, 89 to 109, and 142 to 162; these read MPIFFYLFTTLIIISSLCVVL, VYSVLWLIFTFINAAGLMILL, LLIVIYVGAVAVLFLFVIMML, LSLSIFITLIMFVDLVITVIL, and FMLPFQMAGLILFVAMISCIT.

It belongs to the complex I subunit 6 family.

It localises to the cell membrane. The catalysed reaction is a quinone + NADH + 5 H(+)(in) = a quinol + NAD(+) + 4 H(+)(out). Functionally, NDH-1 shuttles electrons from NADH, via FMN and iron-sulfur (Fe-S) centers, to quinones in the respiratory chain. Couples the redox reaction to proton translocation (for every two electrons transferred, four hydrogen ions are translocated across the cytoplasmic membrane), and thus conserves the redox energy in a proton gradient. The sequence is that of NADH-quinone oxidoreductase subunit J (nuoJ) from Rickettsia typhi (strain ATCC VR-144 / Wilmington).